Here is a 521-residue protein sequence, read N- to C-terminus: Glycogen synthase (521 aa).

Lys-18 is a binding site for ADP-alpha-D-glucose.

The protein belongs to the glycosyltransferase 1 family. Bacterial/plant glycogen synthase subfamily.

It catalyses the reaction [(1-&gt;4)-alpha-D-glucosyl](n) + ADP-alpha-D-glucose = [(1-&gt;4)-alpha-D-glucosyl](n+1) + ADP + H(+). It participates in glycan biosynthesis; glycogen biosynthesis. Synthesizes alpha-1,4-glucan chains using ADP-glucose. The chain is Glycogen synthase from Bordetella petrii (strain ATCC BAA-461 / DSM 12804 / CCUG 43448).